We begin with the raw amino-acid sequence, 587 residues long: APOBEC1 complementation factor (587 aa).

RRM domains lie at 56-134, 136-218, and 231-303; these read CEIF…ASVD, CRLF…WAEP, and KILY…LAKP. The segment at 360–409 is required for nuclear localization; it reads HFPATKGHLSNRAIIRAPSVRGAAGVRGLGGRGYLAYTGLGRGYQVKGDK. Phosphothreonine is present on Thr491.

In terms of assembly, part of the apolipoprotein B mRNA editing complex with APOBEC1. Interacts with TNPO2; TNPO2 may be responsible for transport of A1CF into the nucleus. Interacts with SYNCRIP. Interacts with CELF2/CUGBP2. Interacts with RBM47.

The protein resides in the nucleus. It is found in the endoplasmic reticulum. The protein localises to the cytoplasm. Essential component of the apolipoprotein B mRNA editing enzyme complex which is responsible for the postranscriptional editing of a CAA codon for Gln to a UAA codon for stop in APOB mRNA. Binds to APOB mRNA and is probably responsible for docking the catalytic subunit, APOBEC1, to the mRNA to allow it to deaminate its target cytosine. The complex also seems to protect the edited APOB mRNA from nonsense-mediated decay. This Pongo abelii (Sumatran orangutan) protein is APOBEC1 complementation factor (A1CF).